We begin with the raw amino-acid sequence, 390 residues long: Flagellar P-ring protein (390 aa).

Positions 1–36 are cleaved as a signal peptide; that stretch reads MFFSRKIRSLLLTPKRRWSLILTLCLIFTGINFSTS.

The protein belongs to the FlgI family. In terms of assembly, the basal body constitutes a major portion of the flagellar organelle and consists of four rings (L,P,S, and M) mounted on a central rod.

The protein resides in the periplasm. Its subcellular location is the bacterial flagellum basal body. Assembles around the rod to form the L-ring and probably protects the motor/basal body from shearing forces during rotation. In Desulfotalea psychrophila (strain LSv54 / DSM 12343), this protein is Flagellar P-ring protein.